Reading from the N-terminus, the 55-residue chain is Large ribosomal subunit protein bL33 (55 aa).

The protein belongs to the bacterial ribosomal protein bL33 family.

The polypeptide is Large ribosomal subunit protein bL33 (Campylobacter fetus subsp. fetus (strain 82-40)).